Here is a 305-residue protein sequence, read N- to C-terminus: Coenzyme PQQ synthesis protein B (305 aa).

The protein belongs to the PqqB family.

It functions in the pathway cofactor biosynthesis; pyrroloquinoline quinone biosynthesis. In terms of biological role, may be involved in the transport of PQQ or its precursor to the periplasm. The protein is Coenzyme PQQ synthesis protein B of Cupriavidus taiwanensis (strain DSM 17343 / BCRC 17206 / CCUG 44338 / CIP 107171 / LMG 19424 / R1) (Ralstonia taiwanensis (strain LMG 19424)).